A 346-amino-acid chain; its full sequence is tRNA N6-adenosine threonylcarbamoyltransferase (346 aa).

The Fe cation site is built by H111 and H115. Substrate-binding positions include 134–138 (LVSGG), D167, G180, D184, and N280. A Fe cation-binding site is contributed by D308.

It belongs to the KAE1 / TsaD family. Fe(2+) serves as cofactor.

The protein resides in the cytoplasm. The catalysed reaction is L-threonylcarbamoyladenylate + adenosine(37) in tRNA = N(6)-L-threonylcarbamoyladenosine(37) in tRNA + AMP + H(+). In terms of biological role, required for the formation of a threonylcarbamoyl group on adenosine at position 37 (t(6)A37) in tRNAs that read codons beginning with adenine. Is involved in the transfer of the threonylcarbamoyl moiety of threonylcarbamoyl-AMP (TC-AMP) to the N6 group of A37, together with TsaE and TsaB. TsaD likely plays a direct catalytic role in this reaction. This Crocosphaera subtropica (strain ATCC 51142 / BH68) (Cyanothece sp. (strain ATCC 51142)) protein is tRNA N6-adenosine threonylcarbamoyltransferase.